Reading from the N-terminus, the 158-residue chain is G-protein-signaling modulator 3 (158 aa).

Residues 1-53 (MEAERPQEDGEQSLPQDDQGWPPVNSTARPWRSAPPSPPPPGTRHTALGPRSG) form a disordered region. Phosphoserine occurs at positions 33 and 37. Over residues 33 to 42 (SAPPSPPPPG) the composition is skewed to pro residues. Positions 43–53 (TRHTALGPRSG) are enriched in low complexity. Phosphoserine is present on residues S54 and S57. Residue T60 is modified to Phosphothreonine. The GoLoco 1 domain occupies 60-82 (TELLLDLVAEAQSRRLEEQRAAF). Residues 78 to 97 (QRAAFHTPKVPPSLAPTPPR) are disordered. Residues 86–96 (KVPPSLAPTPP) show a composition bias toward pro residues. GoLoco domains are found at residues 102–124 (KEQL…RSDP) and 130–153 (GQEL…RSRP).

The protein localises to the cytoplasm. In terms of biological role, interacts with subunit of G(i) alpha proteins and regulates the activation of G(i) alpha proteins. This chain is G-protein-signaling modulator 3 (Gpsm3), found in Rattus norvegicus (Rat).